A 31-amino-acid polypeptide reads, in one-letter code: Cytochrome b6-f complex subunit 6 (31 aa).

Residues 4–26 (LTSYFGFLLAALTITSALFIGLN) traverse the membrane as a helical segment.

The protein belongs to the PetL family. In terms of assembly, the 4 large subunits of the cytochrome b6-f complex are cytochrome b6, subunit IV (17 kDa polypeptide, PetD), cytochrome f and the Rieske protein, while the 4 small subunits are PetG, PetL, PetM and PetN. The complex functions as a dimer.

Its subcellular location is the plastid. The protein localises to the chloroplast thylakoid membrane. In terms of biological role, component of the cytochrome b6-f complex, which mediates electron transfer between photosystem II (PSII) and photosystem I (PSI), cyclic electron flow around PSI, and state transitions. PetL is important for photoautotrophic growth as well as for electron transfer efficiency and stability of the cytochrome b6-f complex. This Blitum bonus-henricus (Good King Henry) protein is Cytochrome b6-f complex subunit 6.